The following is a 645-amino-acid chain: Meiosis induction protein kinase IME2/SME1 (645 aa).

Positions 1–24 (MVEKRSRQSSSSGSEFSVPPDVDN) are disordered. The span at 8–17 (QSSSSGSEFS) shows a compositional bias: low complexity. A Protein kinase domain is found at 38-386 (YQLIEKLGAG…AQELCEMPFF (349 aa)). ATP is bound by residues 44-52 (LGAGSFGCV) and Lys67. Catalysis depends on Asp193, which acts as the Proton acceptor.

It belongs to the protein kinase superfamily. Ser/Thr protein kinase family.

It catalyses the reaction L-seryl-[protein] + ATP = O-phospho-L-seryl-[protein] + ADP + H(+). It carries out the reaction L-threonyl-[protein] + ATP = O-phospho-L-threonyl-[protein] + ADP + H(+). Its function is as follows. Protein kinase which is essential for the initiation of meiosis and sporulation. The sequence is that of Meiosis induction protein kinase IME2/SME1 (IME2) from Saccharomyces cerevisiae (strain ATCC 204508 / S288c) (Baker's yeast).